Reading from the N-terminus, the 126-residue chain is Profilin-2 (126 aa).

Residue Ser2 is modified to Blocked amino end (Ser). Lys104 carries the post-translational modification N6,N6,N6-trimethyllysine.

The protein belongs to the profilin family. In terms of assembly, occurs in many kinds of cells as a complex with monomeric actin in a 1:1 ratio.

The protein resides in the cytoplasm. It is found in the cytoskeleton. In terms of biological role, binds to actin and affects the structure of the cytoskeleton. At high concentrations, profilin prevents the polymerization of actin, whereas it enhances it at low concentrations. By binding to PIP2, it inhibits the formation of IP3 and DG. The protein is Profilin-2 of Acanthamoeba castellanii (Amoeba).